Consider the following 351-residue polypeptide: Caveolin-2 (351 aa).

Residues 1–14 (MTRQNTSESDNTQR) are compositionally biased toward polar residues. Disordered regions lie at residues 1 to 55 (MTRQ…QGIA), 71 to 93 (HRTSLNQEVPTPQRRSHPQYDNL), and 144 to 193 (QKGS…PEME). Topologically, residues 1-261 (MTRQNTSESD…FEIVRIYSYK (261 aa)) are cytoplasmic. Residues 22–31 (TVDDIDELTD) are compositionally biased toward acidic residues. The span at 38–51 (HHHHHHHHEHHHQH) shows a compositional bias: basic residues. Residues 167 to 184 (PAQQSAPPTQQSRPQTTS) show a composition bias toward low complexity. The segment at residues 262-290 (ILTLIFGLIIAFLGGILFALFAFLNIWIF) is an intramembrane region (helical). The Cytoplasmic portion of the chain corresponds to 291–351 (RPILILTRMA…EVWEKHIHHV (61 aa)).

Belongs to the caveolin family. As to quaternary structure, homooligomer. Expressed in intracellular bodies in intestinal cells.

It localises to the golgi apparatus membrane. The protein resides in the cell membrane. Its subcellular location is the membrane. It is found in the caveola. The protein localises to the apical cell membrane. May act as a scaffolding protein within caveolar membranes. Interacts directly with G-protein alpha subunits and can regulate their activity. Thought to have a role in the uptake of lipids and proteins in the intestinal cells; operates in the apical uptake of lipid markers and trafficking of yolk proteins. Affects fecundity and egg laying. The polypeptide is Caveolin-2 (cav-2) (Caenorhabditis elegans).